We begin with the raw amino-acid sequence, 268 residues long: MQKTNKFLKIGTKEFKSRLLVGTGKYSSLEVMQKSLINTKCEIVTVAVRRVQGLEHGHKGLMESIDWKRIWMLPNTAGCSNAEEAIRIAKLGRELAKLAGQENNNFVKLEVIPDKKYLLPDPIGTLKAAEQLVKEGFTVLPYINSDPLIAKQLEEIGCATVMPLGSPIGSAQGIRNAANIAMIIAESRIPIIIDAGIGVPSEAAQALEMGADGVLINSAIALAENPILMAQAFSKATEAGRDGYLSGRLKENPLASPSSPLEGVISNN.

The active-site Schiff-base intermediate with DXP is lysine 108. 1-deoxy-D-xylulose 5-phosphate is bound by residues glycine 169, 195–196, and 217–218; these read AG and NS. Residues 248 to 268 form a disordered region; it reads RLKENPLASPSSPLEGVISNN. The span at 255 to 268 shows a compositional bias: polar residues; it reads ASPSSPLEGVISNN.

It belongs to the ThiG family. In terms of assembly, homotetramer. Forms heterodimers with either ThiH or ThiS.

Its subcellular location is the cytoplasm. It catalyses the reaction [ThiS sulfur-carrier protein]-C-terminal-Gly-aminoethanethioate + 2-iminoacetate + 1-deoxy-D-xylulose 5-phosphate = [ThiS sulfur-carrier protein]-C-terminal Gly-Gly + 2-[(2R,5Z)-2-carboxy-4-methylthiazol-5(2H)-ylidene]ethyl phosphate + 2 H2O + H(+). Its pathway is cofactor biosynthesis; thiamine diphosphate biosynthesis. Its function is as follows. Catalyzes the rearrangement of 1-deoxy-D-xylulose 5-phosphate (DXP) to produce the thiazole phosphate moiety of thiamine. Sulfur is provided by the thiocarboxylate moiety of the carrier protein ThiS. In vitro, sulfur can be provided by H(2)S. The sequence is that of Thiazole synthase from Prochlorococcus marinus (strain NATL1A).